The following is a 146-amino-acid chain: Lysozyme C-2 (146 aa).

The first 18 residues, 1 to 18 (MKTLLVLALLLLSVSVQA), serve as a signal peptide directing secretion. The region spanning 19-146 (KVYDRCEFAR…VSQYIRGCKL (128 aa)) is the C-type lysozyme domain. 4 cysteine pairs are disulfide-bonded: Cys24/Cys144, Cys48/Cys132, Cys81/Cys97, and Cys93/Cys111. Residues Glu53 and Asp69 contribute to the active site.

Belongs to the glycosyl hydrolase 22 family. Monomer.

It localises to the secreted. It carries out the reaction Hydrolysis of (1-&gt;4)-beta-linkages between N-acetylmuramic acid and N-acetyl-D-glucosamine residues in a peptidoglycan and between N-acetyl-D-glucosamine residues in chitodextrins.. Lysozymes have primarily a bacteriolytic function; those in tissues and body fluids are associated with the monocyte-macrophage system and enhance the activity of immunoagents. This chain is Lysozyme C-2, found in Sus scrofa (Pig).